The primary structure comprises 395 residues: Chorismate synthase (395 aa).

2 residues coordinate NADP(+): Arg40 and Arg46. Residues 99 to 120 (PREGRNAPLSRPRPGHADLTGM) form a disordered region. FMN contacts are provided by residues 134-136 (RSS), 256-257 (QA), Gly301, 316-320 (KPIPS), and Arg342.

It belongs to the chorismate synthase family. In terms of assembly, homotetramer. It depends on FMNH2 as a cofactor.

It carries out the reaction 5-O-(1-carboxyvinyl)-3-phosphoshikimate = chorismate + phosphate. The protein operates within metabolic intermediate biosynthesis; chorismate biosynthesis; chorismate from D-erythrose 4-phosphate and phosphoenolpyruvate: step 7/7. Catalyzes the anti-1,4-elimination of the C-3 phosphate and the C-6 proR hydrogen from 5-enolpyruvylshikimate-3-phosphate (EPSP) to yield chorismate, which is the branch point compound that serves as the starting substrate for the three terminal pathways of aromatic amino acid biosynthesis. This reaction introduces a second double bond into the aromatic ring system. This is Chorismate synthase from Bifidobacterium longum (strain DJO10A).